The following is a 115-amino-acid chain: uncharacterized protein (115 aa).

This is an uncharacterized protein from Caenorhabditis elegans.